The following is a 160-amino-acid chain: Small ribosomal subunit protein bS6 (160 aa).

The protein belongs to the bacterial ribosomal protein bS6 family.

Binds together with bS18 to 16S ribosomal RNA. This is Small ribosomal subunit protein bS6 from Ureaplasma parvum serovar 3 (strain ATCC 27815 / 27 / NCTC 11736).